A 186-amino-acid chain; its full sequence is Nicotinamidase/pyrazinamidase (186 aa).

Residue Asp-8 is the Proton acceptor of the active site. Residues Asp-49, His-51, His-57, and His-71 each contribute to the Fe cation site. Lys-96 is an active-site residue. Cys-138 acts as the Nucleophile in catalysis.

Belongs to the isochorismatase family. In terms of assembly, monomer. It depends on Mn(2+) as a cofactor. Requires Fe(2+) as cofactor.

The catalysed reaction is nicotinamide + H2O = nicotinate + NH4(+). It catalyses the reaction pyrazinamide + H2O = pyrazine-2-carboxylate + NH4(+). Its pathway is cofactor biosynthesis; nicotinate biosynthesis; nicotinate from nicotinamide: step 1/1. With respect to regulation, is inhibited by Cu(2+), Zn(2+) and Fe(3+). Its function is as follows. Catalyzes the deamidation of nicotinamide (NAM) into nicotinate. Likely functions in the cyclical salvage pathway for production of NAD from nicotinamide. Is involved in the activation of the first-line antituberculous drug pyrazinamide (PZA) by converting it into the active form, pyrazinoic acid. This chain is Nicotinamidase/pyrazinamidase, found in Mycobacterium tuberculosis (strain ATCC 25618 / H37Rv).